A 716-amino-acid polypeptide reads, in one-letter code: Phenylalanine/tyrosine ammonia-lyase (716 aa).

The active-site Proton donor/acceptor is the Tyr-110. The segment at residues 211–213 (ASG) is a cross-link (5-imidazolinone (Ala-Gly)). Ser-212 bears the 2,3-didehydroalanine (Ser) mark. The (E)-cinnamate site is built by Asn-270, Gln-360, Arg-366, Asn-397, Lys-468, Glu-496, and Asn-499.

Belongs to the PAL/histidase family. As to quaternary structure, homotetramer. Dimer of dimers. In terms of processing, contains an active site 4-methylidene-imidazol-5-one (MIO), which is formed autocatalytically by cyclization and dehydration of residues Ala-Ser-Gly.

The protein resides in the cytoplasm. It carries out the reaction L-phenylalanine = (E)-cinnamate + NH4(+). The enzyme catalyses L-tyrosine = (E)-4-coumarate + NH4(+). Its pathway is phenylpropanoid metabolism; trans-cinnamate biosynthesis; trans-cinnamate from L-phenylalanine: step 1/1. Functionally, catalyzes the non-oxidative deamination of L-phenylalanine and L-tyrosine to form trans-cinnamic acid and p-coumaric acid respectively with similar efficiencies. Facilitates the commitment step in phenylpropanoid pathways that produce secondary metabolites such as lignins, coumarins and flavonoids. The sequence is that of Phenylalanine/tyrosine ammonia-lyase (PAL) from Rhodotorula toruloides (Yeast).